Reading from the N-terminus, the 226-residue chain is Large ribosomal subunit protein uL3 (226 aa).

Glutamine 160 bears the N5-methylglutamine mark.

This sequence belongs to the universal ribosomal protein uL3 family. As to quaternary structure, part of the 50S ribosomal subunit. Forms a cluster with proteins L14 and L19. Post-translationally, methylated by PrmB.

In terms of biological role, one of the primary rRNA binding proteins, it binds directly near the 3'-end of the 23S rRNA, where it nucleates assembly of the 50S subunit. This chain is Large ribosomal subunit protein uL3, found in Leptothrix cholodnii (strain ATCC 51168 / LMG 8142 / SP-6) (Leptothrix discophora (strain SP-6)).